Here is a 536-residue protein sequence, read N- to C-terminus: Uridine 5'-monophosphate transferase (536 aa).

The segment at 22–84 (ADHPTHTPED…GLQQCSSSPS (63 aa)) is disordered. Over residues 31–45 (DSPQTVPSPRSSSAH) the composition is skewed to polar residues. A compositionally biased stretch (basic and acidic residues) spans 48-60 (EIQELRSLQETRP). Residues 66–84 (RSQSRSSKHGLQQCSSSPS) show a composition bias toward polar residues. LRR repeat units follow at residues 140 to 164 (AGQA…LHRL), 165 to 189 (AHLR…SLCK), 191 to 211 (LERI…IGAL), 212 to 234 (KNLS…IGQC), 236 to 257 (SLTT…LANL), and 258 to 282 (TQLK…NLDD). The Fido domain occupies 377–533 (ITLDRIFKLN…LEGIATVMNQ (157 aa)).

The protein in the C-terminal section; belongs to the fic family. In terms of assembly, interacts with several members of the Arabidopsis RLCK VIIa subfamily.

It is found in the secreted. Its subcellular location is the host cell. The protein resides in the host cell membrane. It catalyses the reaction L-seryl-[protein] + UTP = O-(5'-uridylyl)-L-seryl-[protein] + diphosphate. The enzyme catalyses L-threonyl-[protein] + UTP = uridylyl-L-threonyl-[protein] + diphosphate. Functions both as a virulence and an avirulence gene in Arabidopsis. Causes disease on the Kashmir (Kas) ecotype, but not on Columbia (Col-0) ecotype. Acts by directly uridylylating the conserved phosphorylation sites in the activation loop of a number of host receptor-like cytoplasmic protein kinases (RLCK), including BIK1, RIPK, PBL1 and PBL2, preventing the activation of these kinases and subsequent signal transduction. In susceptible Arabidopsis plants, uridylylation of BIK1 inhibits the PAMP-triggered immunity (PTI) signaling cascade and thereby promotes bacterial virulence. It also inhibits RPM1-dependent effector-triggered immunity (ETI) in mesophyll tissues by targeting RIPK. In contrast, in the resistant ecotype Col-0, xopAC is a major avirulence gene. Uridylylation of PBL2 triggers the PBL2-RKS1 interaction and thus the assembly of the PBL2-RKS1-ZAR1 complex, which, in turn, activates effector-triggered immunity (ETI) against X.campestris. In Xanthomonas campestris pv. campestris (strain 8004), this protein is Uridine 5'-monophosphate transferase.